The primary structure comprises 169 residues: Myosin regulatory light chain 11 (169 aa).

Ala2 is subject to N,N,N-trimethylalanine. Residues Ser15 and Ser16 each carry the phosphoserine modification. A phosphothreonine mark is found at Thr25 and Thr35. An EF-hand 1 domain is found at 25–60 (TQIQEFKEAFTVIDQNRDGIIDKEDLRDTFAAMGRL). Residues Asp38, Asn40, Asp42, and Asp49 each contribute to the Ca(2+) site. Residue Ser75 is modified to Phosphoserine. EF-hand domains follow at residues 95–130 (DPED…QCDR) and 131–166 (FSQE…GDAK). The residue at position 101 (Thr101) is a Phosphothreonine.

As to quaternary structure, myosin is a hexamer of 2 heavy chains and 4 light chains.

Myosin regulatory subunit that plays an essential to maintain muscle integrity during early development. Plays a role in muscle contraction. The sequence is that of Myosin regulatory light chain 11 (Myl11) from Rattus norvegicus (Rat).